Reading from the N-terminus, the 113-residue chain is Sporulation membrane protein YtrH (113 aa).

The next 3 membrane-spanning stretches (helical) occupy residues 16–36, 51–71, and 86–106; these read FIAL…AYLA, LKIW…YSFE, and LLLI…ISWL.

The protein resides in the forespore outer membrane. Involved in sporulation. May contribute to cortex formation or stability. This chain is Sporulation membrane protein YtrH (ytrH), found in Bacillus subtilis (strain 168).